The following is a 116-amino-acid chain: Small ribosomal subunit protein uS8c (116 aa).

The protein belongs to the universal ribosomal protein uS8 family. In terms of assembly, part of the 30S ribosomal subunit.

The protein localises to the plastid. It is found in the chloroplast. One of the primary rRNA binding proteins, it binds directly to 16S rRNA central domain where it helps coordinate assembly of the platform of the 30S subunit. The polypeptide is Small ribosomal subunit protein uS8c (rps8) (Musa acuminata (Banana)).